A 262-amino-acid polypeptide reads, in one-letter code: Phosphatase SCO2771 (262 aa).

Displays phosphatase activity against p-nitrophenyl phosphate (pNPP) in vitro; however, the physiological substrate is unknown. The protein is Phosphatase SCO2771 of Streptomyces coelicolor (strain ATCC BAA-471 / A3(2) / M145).